Reading from the N-terminus, the 131-residue chain is Insertion element iso-IS1n protein InsB (131 aa).

It belongs to the transposase 27 family.

Absolutely required for transposition of IS1. The chain is Insertion element iso-IS1n protein InsB (insB) from Shigella dysenteriae.